The sequence spans 146 residues: MKLHELQPAAGSRKVRNRVGRGTSSGNGKTSGRGQKGQKARSGGGVRLGFEGGQTPLFRRLPKRGFLNINRKEYAIVNLDQLNAFEDGAEVTPVVLIEAGIVKAEKSGIKILGNGELTKKLTVKAAKFSKSAEEAITAKGGSVEVI.

A disordered region spans residues 1–51 (MKLHELQPAAGSRKVRNRVGRGTSSGNGKTSGRGQKGQKARSGGGVRLGFE). 2 stretches are compositionally biased toward gly residues: residues 23 to 35 (TSSGNGKTSGRGQ) and 42 to 51 (SGGGVRLGFE).

This sequence belongs to the universal ribosomal protein uL15 family. Part of the 50S ribosomal subunit.

Functionally, binds to the 23S rRNA. The protein is Large ribosomal subunit protein uL15 of Streptococcus sanguinis (strain SK36).